We begin with the raw amino-acid sequence, 354 residues long: Protein RecA (354 aa).

65-72 (GPESSGKT) provides a ligand contact to ATP.

The protein belongs to the RecA family.

Its subcellular location is the cytoplasm. Functionally, can catalyze the hydrolysis of ATP in the presence of single-stranded DNA, the ATP-dependent uptake of single-stranded DNA by duplex DNA, and the ATP-dependent hybridization of homologous single-stranded DNAs. It interacts with LexA causing its activation and leading to its autocatalytic cleavage. In Aeromonas hydrophila subsp. hydrophila (strain ATCC 7966 / DSM 30187 / BCRC 13018 / CCUG 14551 / JCM 1027 / KCTC 2358 / NCIMB 9240 / NCTC 8049), this protein is Protein RecA.